The following is a 491-amino-acid chain: Immediate early protein IE1 (491 aa).

Basic and acidic residues predominate over residues 1 to 11; the sequence is MESSAKRKMDP. A nuclear localization signal region spans residues 1-24; that stretch reads MESSAKRKMDPDNPDEGPSSKVPR. The disordered stretch occupies residues 1 to 30; it reads MESSAKRKMDPDNPDEGPSSKVPRPETPVT. The tract at residues 132–346 is interaction with host PML, interference with PML sumoylation and disruption of PML-associated nuclear bodies; the sequence is ILDKVHEPFE…SVMKRRIEEI (215 aa). The segment at 373-445 is interaction with host STAT2; that stretch reads AIAEESDEEE…EEGAQEERED (73 aa). Positions 410–420 are modulation of STAT3/STAT1 signaling; sequence ATIPLSSVIVA. The interval 410–445 is interaction with host STAT3; sequence ATIPLSSVIVAENSDQEESEQSDEEEEEGAQEERED. The segment at 421–472 is acidic; sequence ENSDQEESEQSDEEEEEGAQEEREDTVSVKSEPVSEIEEVAPEEEEDGAEEP. A disordered region spans residues 421–491; that stretch reads ENSDQEESEQ…PMVTRSKADQ (71 aa). A compositionally biased stretch (acidic residues) spans 423–444; the sequence is SDQEESEQSDEEEEEGAQEERE. The tract at residues 449-452 is interaction with host SUMO1; that stretch reads VKSE. Lysine 450 participates in a covalent cross-link: Glycyl lysine isopeptide (Lys-Gly) (interchain with G-Cter in SUMO). The span at 455 to 470 shows a compositional bias: acidic residues; the sequence is SEIEEVAPEEEEDGAE. The chromosome-tethering domain (CTD), binding to histones stretch occupies residues 475–491; that stretch reads SGGKSTHPMVTRSKADQ.

It belongs to the HHV-5 IE1 protein family. As to quaternary structure, forms homodimers. Interacts with human p53/TP53; this interaction inhibits p53/TP53-dependent transactivation activity. Interacts with host STAT1. Interacts with host STAT2; this interaction promotes viral growth and counteracts the antiviral interferon response. May also interact with the host STAT1-STAT2 heterodimer. Interacts with host STAT3; this interaction leads to STAT3 nuclear accumulation and disruption of IL6-induced STAT3 phosphorylation. Interacts with host PML; this interaction inhibits host PML de novo sumoylation and probably inhibits PML regulation of type I and type II interferon-induced gene expression. Interacts with host DAXX. Interacts with host SP100. Interacts with host E2F1. Interacts with host RB1. Interacts with host HDAC1; this interaction inhibits histone deacetylation and promotes viral transcription. Interacts with host HDAC2; this interaction inhibits histone deacetylation and promotes viral transcription. Interacts with host HDAC3; this interaction inhibits histone deacetylation and promotes viral transcription. Interacts with host PLSCR1; this interaction inhibits IE1 transactivating activity. Sumoylated by host PML. Sumoylation abolishes the interaction with host STAT2 and thus the IE1-mediated repression of interferon-stimulated genes.

It is found in the host nucleus. Functionally, plays an important role in transactivating viral early genes as well as activating its own promoter, probably by altering the viral chromatin structure. Expression of IE1 and IE2 proteins is critical for the establishment of lytic infection and reactivation from viral latency. Disrupts PML-associated ND10 nuclear bodies by interfering with host PML and SP100 sumoylation thereby altering the regulation of type I and type II interferon-induced gene expression. Promotes efficient viral growth by interacting with and directing host SP100 to degradation, leading to enhanced acetylation level of histones. In addition, functions in counteracting the host innate antiviral response. Inhibits the type I interferon pathway by directly interacting with and sequestrating host STAT2. Also targets type II interferon pathway by repressing IL6- and STAT3 target genes. Repression of STAT3 genes is due to STAT3 nuclear accumulation and disruption of IL6-induced STAT3 phosphorylation by IE1. This repression is followed by phosphorylation and activation of STAT1. Inhibits host ISG transcription by sequestering host ISGF3 in a PML- and STAT2- binding dependent manner. Alters host cell cycle progression, probably through its interaction with host E2F1 or RB1 that overcomes the RB1-mediated repression of E2F-responsive promoters. This chain is Immediate early protein IE1 (UL123), found in Human cytomegalovirus (strain AD169) (HHV-5).